The sequence spans 422 residues: Dihydroorotase (422 aa).

2 residues coordinate Zn(2+): histidine 61 and histidine 63. Substrate-binding positions include 63 to 65 (HLR) and asparagine 95. Aspartate 153 is a Zn(2+) binding site. Asparagine 278 lines the substrate pocket. Aspartate 305 is a Zn(2+) binding site. Aspartate 305 is a catalytic residue. Substrate contacts are provided by residues histidine 309 and 322–323 (PG).

It belongs to the metallo-dependent hydrolases superfamily. DHOase family. Class I DHOase subfamily. Monomer. Forms a 1:1 stoichiometric complex with PyrB. The complex exists as an equilibrium mixture of heterohexamers, composed of 3 PyrC and 3 PyrB subunits, and dodecamers. The complex has both DHOase and ATCase activities. It depends on Zn(2+) as a cofactor.

The enzyme catalyses (S)-dihydroorotate + H2O = N-carbamoyl-L-aspartate + H(+). The protein operates within pyrimidine metabolism; UMP biosynthesis via de novo pathway; (S)-dihydroorotate from bicarbonate: step 3/3. The monomer has very low activity by itself. Activated several thousandfold by formation of a complex with PyrB aspartate carbamoyltransferase (ATCase). In terms of biological role, catalyzes the reversible cyclization of carbamoyl aspartate to dihydroorotate. This chain is Dihydroorotase, found in Aquifex aeolicus (strain VF5).